A 168-amino-acid chain; its full sequence is Photosystem I assembly protein Ycf3 (168 aa).

3 TPR repeats span residues 35-68 (AFAY…EMDP), 72-105 (SYIL…NPFL), and 120-153 (GEQA…TPDN).

It belongs to the Ycf3 family.

It is found in the plastid membrane. Essential for the assembly of the photosystem I (PSI) complex. May act as a chaperone-like factor to guide the assembly of the PSI subunits. The protein is Photosystem I assembly protein Ycf3 of Cuscuta obtusiflora (Peruvian dodder).